We begin with the raw amino-acid sequence, 545 residues long: SLAIN motif-containing protein 1 (545 aa).

Positions 14–53 form a coiled coil; the sequence is TTNGLVANAELEVKKLQELVRKLEKQNEQLRNRASAVSNC. Composition is skewed to low complexity over residues 268–286 and 466–481; these read TTST…SLYS and IPSS…SGIP. Disordered stretches follow at residues 268-342 and 461-526; these read TTST…IRDC and QGGS…LQPP. Over residues 503 to 522 the composition is skewed to polar residues; sequence STANGSSIPRSKIAQPQRSF.

The protein belongs to the SLAIN motif-containing family.

It localises to the cytoplasm. It is found in the cytoskeleton. In terms of biological role, microtubule plus-end tracking protein that might be involved in the regulation of cytoplasmic microtubule dynamics, microtubule organization and microtubule elongation. This Xenopus tropicalis (Western clawed frog) protein is SLAIN motif-containing protein 1 (slain1).